Here is a 218-residue protein sequence, read N- to C-terminus: Pyridoxine/pyridoxamine 5'-phosphate oxidase (218 aa).

Substrate-binding positions include 14–17 and K72; that span reads RREY. FMN is bound by residues 67–72, 82–83, R88, K89, and Q111; these read RIVLLK and YT. The substrate site is built by Y129, R133, and S137. FMN contacts are provided by residues 146–147 and W191; that span reads QS. 197–199 contacts substrate; it reads RLH. R201 is a binding site for FMN.

Belongs to the pyridoxamine 5'-phosphate oxidase family. In terms of assembly, homodimer. FMN serves as cofactor.

The catalysed reaction is pyridoxamine 5'-phosphate + O2 + H2O = pyridoxal 5'-phosphate + H2O2 + NH4(+). The enzyme catalyses pyridoxine 5'-phosphate + O2 = pyridoxal 5'-phosphate + H2O2. It participates in cofactor metabolism; pyridoxal 5'-phosphate salvage; pyridoxal 5'-phosphate from pyridoxamine 5'-phosphate: step 1/1. The protein operates within cofactor metabolism; pyridoxal 5'-phosphate salvage; pyridoxal 5'-phosphate from pyridoxine 5'-phosphate: step 1/1. Catalyzes the oxidation of either pyridoxine 5'-phosphate (PNP) or pyridoxamine 5'-phosphate (PMP) into pyridoxal 5'-phosphate (PLP). This chain is Pyridoxine/pyridoxamine 5'-phosphate oxidase, found in Escherichia coli O7:K1 (strain IAI39 / ExPEC).